The following is a 382-amino-acid chain: Bestrophin-6 (382 aa).

Transmembrane regions (helical) follow at residues 29-49 (WKLI…VLAI), 68-88 (FINF…TTIV), 231-251 (LAYP…CAFA), and 265-285 (VIHY…MGWL).

This sequence belongs to the anion channel-forming bestrophin (TC 1.A.46) family. Calcium-sensitive chloride channel subfamily.

It localises to the membrane. The chain is Bestrophin-6 (best-6) from Caenorhabditis elegans.